The chain runs to 191 residues: Fe/S biogenesis protein NfuA (191 aa).

Residues Cys149 and Cys152 each coordinate [4Fe-4S] cluster.

Belongs to the NfuA family. As to quaternary structure, homodimer. [4Fe-4S] cluster is required as a cofactor.

Involved in iron-sulfur cluster biogenesis. Binds a 4Fe-4S cluster, can transfer this cluster to apoproteins, and thereby intervenes in the maturation of Fe/S proteins. Could also act as a scaffold/chaperone for damaged Fe/S proteins. The sequence is that of Fe/S biogenesis protein NfuA from Escherichia coli O139:H28 (strain E24377A / ETEC).